Here is a 430-residue protein sequence, read N- to C-terminus: MGALRPQPPRMPAGHVAPAYWQKRGLAAWALWPLAQLYRALVAARRGLYRAGWLKAQHPGRPVIVVGNVIAGGAGKTPVVIALARHLQARGLRVGVIARGHGRSRRDCRAVLPDSPASAVGDEPALIARHFANGPAVPVFVARRRISAARALLAAHPDTDVLLCDDGLQHLALRRDLEICVFNDQGLGNGFLQPAGPLREPWPRSVDFVLHAGAAPGGSPAPAFGVQRSLAPCALRSDGAAVPLARLQGQPLHALAAVARPGEFFAMLQARGLTLAHTEALPDHYDLQRWERMTDPRLTLICTEKDAVKLWPLHPDALAVPLVLHIDPGFFAALDAWLPARRAMPEIAPGSDAAAIIAGTEPTLPENHRPMDPKLLQLLVCPVTKGPLRYDRAAQELISRSARLAYPVRDGIPVLLENEARPLTDEELEQ.

The tract at residues 1–370 is tetraacyldisaccharide 4'-kinase; the sequence is MGALRPQPPR…EPTLPENHRP (370 aa). 70 to 77 contributes to the ATP binding site; that stretch reads IAGGAGKT. Residues 371-396 are UPF0434; the sequence is MDPKLLQLLVCPVTKGPLRYDRAAQE.

It in the N-terminal section; belongs to the LpxK family. In the C-terminal section; belongs to the UPF0434 family.

The catalysed reaction is a lipid A disaccharide + ATP = a lipid IVA + ADP + H(+). The protein operates within glycolipid biosynthesis; lipid IV(A) biosynthesis; lipid IV(A) from (3R)-3-hydroxytetradecanoyl-[acyl-carrier-protein] and UDP-N-acetyl-alpha-D-glucosamine: step 6/6. In terms of biological role, transfers the gamma-phosphate of ATP to the 4'-position of a tetraacyldisaccharide 1-phosphate intermediate (termed DS-1-P) to form tetraacyldisaccharide 1,4'-bis-phosphate (lipid IVA). The protein is Tetraacyldisaccharide 4'-kinase (lpxK) of Verminephrobacter eiseniae (strain EF01-2).